A 472-amino-acid polypeptide reads, in one-letter code: MDWDLKMPVSWDLAELEHNAVPNMAAAASAAEPGIAAVAASRGAPGRPECSVDLKLGGLGEFGAADALKEPAAAAKAPVSSAAAAASVAKVPPSTSTLKRPRGGGGGGGGQCPSCAVDGCKADLSKHRDYHRRHKVCEPHSKTPVVVVSGREMRFCQQCSRFHLLGEFDEAKRSCRKRLDGHNRRRRKPQADSMSSGSFMTSQQGTRFASFTPPRPEPSWPGIIKSEETPYYSHHHHPHPVMTSRQPHFVGSPSSATTAAFSPKEGRRFPFLHEGDQISFGGGGGAAAAATLEISVCQTTVVAPPPPESSSSNKMFSSDGLTTATTTTTTAHHHHHHHQVLDSDCALSLLSSPANSSSVDVSRMVQPSPAAAAGAEHHHHHQIPMAQPLVPNLQQQFGGSSPWFASSPAAAAVAGGGFACPSMDSEQQQQQQLNAVLVPGSNENEMNYHGMFHVGGEGSSDGTSPSLPFSWQ.

Positions Ala-89–Gly-110 are disordered. Residues Cys-112–Pro-189 form an SBP-type zinc finger. Zn(2+)-binding residues include Cys-115, Cys-120, Cys-137, His-140, Cys-156, Cys-159, His-163, and Cys-175. The short motif at Lys-172–Lys-188 is the Bipartite nuclear localization signal element. Disordered regions lie at residues Leu-179–Pro-218, Ser-233–Phe-261, and Ser-358–His-381. Residues Asp-192–Ala-209 are compositionally biased toward polar residues. A compositionally biased stretch (low complexity) spans Ser-252 to Phe-261.

In terms of tissue distribution, expressed in young panicles.

Its subcellular location is the nucleus. In terms of biological role, trans-acting factor that binds specifically to the consensus nucleotide sequence 5'-TNCGTACAA-3'. May be involved in panicle development. The sequence is that of Squamosa promoter-binding-like protein 18 (SPL18) from Oryza sativa subsp. japonica (Rice).